A 140-amino-acid polypeptide reads, in one-letter code: Ergosterol biosynthetic protein 28 homolog (140 aa).

4 consecutive transmembrane segments (helical) span residues F4–L24, T52–H72, I79–G99, and I105–L125.

It belongs to the ERG28 family. In terms of tissue distribution, ubiquitous; strongly expressed in testis and some cancer cell lines.

The protein resides in the endoplasmic reticulum membrane. This is Ergosterol biosynthetic protein 28 homolog from Homo sapiens (Human).